Reading from the N-terminus, the 660-residue chain is Acetyl-coenzyme A synthetase (660 aa).

CoA contacts are provided by residues 197 to 200 and threonine 317; that span reads RGGK. ATP contacts are provided by residues 397 to 399, 421 to 426, aspartate 512, and arginine 528; these read GEP and DTFWQT. Position 536 (serine 536) interacts with CoA. Arginine 539 contributes to the ATP binding site. Mg(2+)-binding residues include valine 550 and valine 555. Residue lysine 625 is modified to N6-acetyllysine.

The protein belongs to the ATP-dependent AMP-binding enzyme family. Mg(2+) serves as cofactor. Post-translationally, acetylated. Deacetylation by the SIR2-homolog deacetylase activates the enzyme.

The enzyme catalyses acetate + ATP + CoA = acetyl-CoA + AMP + diphosphate. In terms of biological role, catalyzes the conversion of acetate into acetyl-CoA (AcCoA), an essential intermediate at the junction of anabolic and catabolic pathways. AcsA undergoes a two-step reaction. In the first half reaction, AcsA combines acetate with ATP to form acetyl-adenylate (AcAMP) intermediate. In the second half reaction, it can then transfer the acetyl group from AcAMP to the sulfhydryl group of CoA, forming the product AcCoA. The sequence is that of Acetyl-coenzyme A synthetase from Ralstonia nicotianae (strain ATCC BAA-1114 / GMI1000) (Ralstonia solanacearum).